A 469-amino-acid chain; its full sequence is ATP synthase subunit beta (469 aa).

Position 156 to 163 (156 to 163) interacts with ATP; that stretch reads GGAGVGKT.

This sequence belongs to the ATPase alpha/beta chains family. F-type ATPases have 2 components, CF(1) - the catalytic core - and CF(0) - the membrane proton channel. CF(1) has five subunits: alpha(3), beta(3), gamma(1), delta(1), epsilon(1). CF(0) has three main subunits: a(1), b(2) and c(9-12). The alpha and beta chains form an alternating ring which encloses part of the gamma chain. CF(1) is attached to CF(0) by a central stalk formed by the gamma and epsilon chains, while a peripheral stalk is formed by the delta and b chains.

Its subcellular location is the cell membrane. The enzyme catalyses ATP + H2O + 4 H(+)(in) = ADP + phosphate + 5 H(+)(out). Its function is as follows. Produces ATP from ADP in the presence of a proton gradient across the membrane. The catalytic sites are hosted primarily by the beta subunits. This Lactococcus lactis subsp. cremoris (strain SK11) protein is ATP synthase subunit beta.